We begin with the raw amino-acid sequence, 375 residues long: Decapping and exoribonuclease protein Rai1 (375 aa).

Substrate contacts are provided by residues Arg43 and 120 to 122 (LRG). The Mg(2+) site is built by Glu180, Glu222, Asp224, Glu247, and Leu248. Glu222 lines the substrate pocket. Substrate contacts are provided by Lys249 and Gln274.

This sequence belongs to the DXO/Dom3Z family. Interacts with Rat1. It depends on Mg(2+) as a cofactor.

It catalyses the reaction a 5'-end triphospho-ribonucleoside in mRNA + H2O = a 5'-end phospho-ribonucleoside in mRNA + diphosphate + H(+). The enzyme catalyses a 5'-end NAD(+)-phospho-ribonucleoside in mRNA + H2O = a 5'-end phospho-ribonucleoside in mRNA + NAD(+) + H(+). It carries out the reaction a 5'-end (N(7)-methyl 5'-triphosphoguanosine)-ribonucleoside-ribonucleotide in mRNA + H2O = a (N(7)-methyl 5'-triphosphoguanosine)-nucleoside + a 5'-end phospho-ribonucleoside in mRNA + H(+). In terms of biological role, decapping enzyme for NAD-capped RNAs: specifically hydrolyzes the nicotinamide adenine dinucleotide (NAD) cap from a subset of RNAs by removing the entire NAD moiety from the 5'-end of an NAD-capped RNA. The NAD-cap is present at the 5'-end of some RNAs and snoRNAs. In contrast to the canonical 5'-end N7 methylguanosine (m7G) cap, the NAD cap promotes mRNA decay. Also acts as a non-canonical decapping enzyme that removes the entire cap structure of m7G capped or incompletely capped RNAs and mediates their subsequent degradation. Specifically degrades pre-mRNAs with a defective 5'-end m7G cap and is part of a pre-mRNA capping quality control. Possesses 5'-pyrophosphohydrolase activity, hydrolyzing the 5'-end triphosphate to release pyrophosphates, and 5'-3' exonuclease activity. May be involved in RNA degradation in the nucleus. This chain is Decapping and exoribonuclease protein Rai1, found in Drosophila melanogaster (Fruit fly).